A 314-amino-acid chain; its full sequence is Olfactory receptor 2Z1 (314 aa).

Topologically, residues 1-25 are extracellular; the sequence is MGDVNQSVASDFILVGLFSHSGSRQ. Asn-5 carries N-linked (GlcNAc...) asparagine glycosylation. The chain crosses the membrane as a helical span at residues 26-49; that stretch reads LLFSLVAVMFVIGLLGNTVLLFLI. Over 50–57 the chain is Cytoplasmic; it reads RVDSRLHT. The helical transmembrane segment at 58–79 threads the bilayer; it reads PMYFLLSQLSLFDIGCPMVTIP. Over 80–100 the chain is Extracellular; that stretch reads KMASDFLRGEGATSYGGGAAQ. A helical transmembrane segment spans residues 101–120; the sequence is IFFLTLMGVAEGVLLVLMSY. Residues 121 to 139 lie on the Cytoplasmic side of the membrane; the sequence is DRYVAVCQPLQYPVLMRRQ. A helical membrane pass occupies residues 140–158; sequence VCLLMMGSSWVVGVLNASI. The Extracellular segment spans residues 159–195; the sequence is QTSITLHFPYCASRIVDHFFCEVPALLKLSCADTCAY. Residues 196-219 traverse the membrane as a helical segment; it reads EMALSTSGVLILMLPLSLIATSYG. At 220–236 the chain is on the cytoplasmic side; sequence HVLQAVLSMRSEEARHK. A helical membrane pass occupies residues 237–259; it reads AVTTCSSHITVVGLFYGAAVFMY. Topologically, residues 260 to 272 are extracellular; it reads MVPCAYHSPQQDN. The helical transmembrane segment at 273 to 292 threads the bilayer; sequence VVSLFYSLVTPTLNPLIYSL. Residues 293–314 are Cytoplasmic-facing; the sequence is RNPEVWMALVKVLSRAGLRQMC.

This sequence belongs to the G-protein coupled receptor 1 family.

It localises to the cell membrane. In terms of biological role, odorant receptor. The protein is Olfactory receptor 2Z1 (OR2Z1) of Homo sapiens (Human).